A 501-amino-acid polypeptide reads, in one-letter code: Phenylalanine--tRNA ligase alpha subunit (501 aa).

Residues threonine 344, 383–385 (QID), and phenylalanine 424 contribute to the L-phenylalanine site. Position 426 (glutamate 426) interacts with Mg(2+). Position 449 (phenylalanine 449) interacts with L-phenylalanine.

The protein belongs to the class-II aminoacyl-tRNA synthetase family. Phe-tRNA synthetase alpha subunit type 2 subfamily. Tetramer of two alpha and two beta subunits. Mg(2+) serves as cofactor.

It localises to the cytoplasm. The catalysed reaction is tRNA(Phe) + L-phenylalanine + ATP = L-phenylalanyl-tRNA(Phe) + AMP + diphosphate + H(+). The protein is Phenylalanine--tRNA ligase alpha subunit of Thermococcus kodakarensis (strain ATCC BAA-918 / JCM 12380 / KOD1) (Pyrococcus kodakaraensis (strain KOD1)).